We begin with the raw amino-acid sequence, 226 residues long: Ribonuclease 3 (226 aa).

An RNase III domain is found at 7-129 (LPRLCRTLGY…IIGAIYLDSD (123 aa)). Residue glutamate 42 participates in Mg(2+) binding. Residue aspartate 46 is part of the active site. Mg(2+) is bound by residues aspartate 115 and glutamate 118. Glutamate 118 is a catalytic residue. In terms of domain architecture, DRBM spans 156 to 226 (DAKTLLQEYL…AAQVLELLKK (71 aa)).

Belongs to the ribonuclease III family. In terms of assembly, homodimer. It depends on Mg(2+) as a cofactor.

It is found in the cytoplasm. It catalyses the reaction Endonucleolytic cleavage to 5'-phosphomonoester.. Functionally, digests double-stranded RNA. Involved in the processing of primary rRNA transcript to yield the immediate precursors to the large and small rRNAs (23S and 16S). Processes some mRNAs, and tRNAs when they are encoded in the rRNA operon. Processes pre-crRNA and tracrRNA of type II CRISPR loci if present in the organism. In Shewanella sp. (strain MR-7), this protein is Ribonuclease 3.